The chain runs to 116 residues: Large ribosomal subunit protein bL19 (116 aa).

This sequence belongs to the bacterial ribosomal protein bL19 family.

Its function is as follows. This protein is located at the 30S-50S ribosomal subunit interface and may play a role in the structure and function of the aminoacyl-tRNA binding site. In Clostridium botulinum (strain Eklund 17B / Type B), this protein is Large ribosomal subunit protein bL19.